The chain runs to 125 residues: Large ribosomal subunit protein bL19 (125 aa).

Belongs to the bacterial ribosomal protein bL19 family.

This protein is located at the 30S-50S ribosomal subunit interface and may play a role in the structure and function of the aminoacyl-tRNA binding site. The sequence is that of Large ribosomal subunit protein bL19 from Ehrlichia canis (strain Jake).